The chain runs to 252 residues: MRKKFGIIVALIALTTLLSGCTEINEPITPNSDGIWNTIFVYPVSWLITNVAGVFNEGYGLAIIIVTLFVRLLLMPLNVKQIKSSKAMQEIQPKLQEIQKKYTSKDANTQQKLQQETMELFQKNGVNPLAGCLPILVQMPIFVAMYHAIMRTPEISTHSFLWFQLGSPDYILPILTGLFTFLQQKLMMSTNTSMNSNPQMKLQMQIMLYVMPIMIGVMAFFFPAALALYWVTGNIFMVFQTLLINKPMMAKK.

The first 20 residues, 1 to 20 (MRKKFGIIVALIALTTLLSG), serve as a signal peptide directing secretion. The N-palmitoyl cysteine moiety is linked to residue cysteine 21. Residue cysteine 21 is the site of S-diacylglycerol cysteine attachment. 5 helical membrane passes run 59-79 (YGLAIIIVTLFVRLLLMPLNV), 129-149 (LAGCLPILVQMPIFVAMYHAI), 160-180 (FLWFQLGSPDYILPILTGLFT), 206-226 (IMLYVMPIMIGVMAFFFPAAL), and 228-248 (LYWVTGNIFMVFQTLLINKPM).

This sequence belongs to the OXA1/ALB3/YidC family. Type 2 subfamily.

It is found in the cell membrane. Required for the insertion and/or proper folding and/or complex formation of integral membrane proteins into the membrane. Involved in integration of membrane proteins that insert both dependently and independently of the Sec translocase complex, as well as at least some lipoproteins. This is Membrane protein insertase YidC from Oceanobacillus iheyensis (strain DSM 14371 / CIP 107618 / JCM 11309 / KCTC 3954 / HTE831).